The following is a 347-amino-acid chain: Doublecortin domain-containing protein 2C (347 aa).

2 consecutive Doublecortin domains span residues K16–I98 and R136–W217. The interval K235–S260 is disordered. Basic and acidic residues predominate over residues K241 to L251.

It is found in the cell projection. It localises to the cilium. Its subcellular location is the flagellum. The protein resides in the cytoplasm. The chain is Doublecortin domain-containing protein 2C from Mus musculus (Mouse).